The sequence spans 183 residues: Macro domain-containing protein (183 aa).

The Macro domain maps to M1–D174.

The protein belongs to the MacroD-type family.

The chain is Macro domain-containing protein from Acinetobacter sp. (strain ED45-25).